A 984-amino-acid polypeptide reads, in one-letter code: DNA polymerase (984 aa).

Residues 804 to 827 are bipartite nuclear localization signal; that stretch reads DNPGKKRKSTDDNEGPSPKRRVIT. The monopartite nuclear localization signal stretch occupies residues 939–948; that stretch reads CSVKRKRDDD. The interval 943 to 969 is disordered; that stretch reads RKRDDDDDNDDDDDDDCDSSDSENDTQ. A compositionally biased stretch (acidic residues) spans 947 to 966; it reads DDDDNDDDDDDDCDSSDSEN.

The protein belongs to the DNA polymerase type-B family.

The protein localises to the host nucleus. It carries out the reaction DNA(n) + a 2'-deoxyribonucleoside 5'-triphosphate = DNA(n+1) + diphosphate. Replicates the viral genome, host DNA polymerases cannot substitute for the viral enzyme in this process. This chain is DNA polymerase (POL), found in Autographa californica nuclear polyhedrosis virus (AcMNPV).